A 314-amino-acid polypeptide reads, in one-letter code: Chitinase 1 (314 aa).

A signal peptide spans 1 to 26; it reads MASVSPSSLLLLFFALLSPLLPLTSA. A GH18 domain is found at 27 to 296; it reads LVFREYIGSQ…NVFRYEMQAQ (270 aa). E151 acts as the Proton donor in catalysis.

This sequence belongs to the glycosyl hydrolase 18 family. Chitinase class II subfamily.

It catalyses the reaction Random endo-hydrolysis of N-acetyl-beta-D-glucosaminide (1-&gt;4)-beta-linkages in chitin and chitodextrins.. Able to cleave glycolchitin. This is Chitinase 1 from Tulipa saxatilis subsp. bakeri (Tulip).